The chain runs to 155 residues: Small ribosomal subunit protein uS7 (155 aa).

This sequence belongs to the universal ribosomal protein uS7 family. As to quaternary structure, part of the 30S ribosomal subunit. Contacts proteins S9 and S11.

One of the primary rRNA binding proteins, it binds directly to 16S rRNA where it nucleates assembly of the head domain of the 30S subunit. Is located at the subunit interface close to the decoding center, probably blocks exit of the E-site tRNA. In Desulforapulum autotrophicum (strain ATCC 43914 / DSM 3382 / VKM B-1955 / HRM2) (Desulfobacterium autotrophicum), this protein is Small ribosomal subunit protein uS7.